The following is a 269-amino-acid chain: Shikimate dehydrogenase (NADP(+)) (269 aa).

Residues 19-21 (SLS) and Thr-66 each bind shikimate. The active-site Proton acceptor is the Lys-70. Asp-82 contributes to the NADP(+) binding site. Shikimate contacts are provided by Asn-91 and Asp-106. NADP(+)-binding positions include 130-134 (GAGGA), 153-158 (NRTKEK), and Ile-214. A shikimate-binding site is contributed by Tyr-216. Gly-235 contributes to the NADP(+) binding site. Position 242 (Gln-242) interacts with shikimate.

The protein belongs to the shikimate dehydrogenase family. As to quaternary structure, homodimer.

It carries out the reaction shikimate + NADP(+) = 3-dehydroshikimate + NADPH + H(+). The protein operates within metabolic intermediate biosynthesis; chorismate biosynthesis; chorismate from D-erythrose 4-phosphate and phosphoenolpyruvate: step 4/7. Its function is as follows. Involved in the biosynthesis of the chorismate, which leads to the biosynthesis of aromatic amino acids. Catalyzes the reversible NADPH linked reduction of 3-dehydroshikimate (DHSA) to yield shikimate (SA). The sequence is that of Shikimate dehydrogenase (NADP(+)) from Aquifex aeolicus (strain VF5).